The sequence spans 152 residues: Cytochrome c-type biogenesis protein CcmE 2 (152 aa).

The Cytoplasmic portion of the chain corresponds to 1–8 (MNPQRRRR). A helical; Signal-anchor for type II membrane protein membrane pass occupies residues 9 to 29 (LWLVLALVLAGGLATTLVAMA). Residues 30–152 (LQRNVAYLYT…HQVAPAKVTQ (123 aa)) are Periplasmic-facing. The heme site is built by histidine 123 and tyrosine 127.

The protein belongs to the CcmE/CycJ family.

It localises to the cell inner membrane. In terms of biological role, heme chaperone required for the biogenesis of c-type cytochromes. Transiently binds heme delivered by CcmC and transfers the heme to apo-cytochromes in a process facilitated by CcmF and CcmH. This chain is Cytochrome c-type biogenesis protein CcmE 2, found in Xanthomonas campestris pv. campestris (strain 8004).